Consider the following 627-residue polypeptide: tRNA uridine 5-carboxymethylaminomethyl modification enzyme MnmG (627 aa).

FAD contacts are provided by residues 13-18 (GGGHAG), Val125, and Ser180. 274–288 (GPRYCPSIEDKVVRF) lines the NAD(+) pocket. Residue Gln371 coordinates FAD.

This sequence belongs to the MnmG family. In terms of assembly, homodimer. Heterotetramer of two MnmE and two MnmG subunits. FAD serves as cofactor.

Its subcellular location is the cytoplasm. Its function is as follows. NAD-binding protein involved in the addition of a carboxymethylaminomethyl (cmnm) group at the wobble position (U34) of certain tRNAs, forming tRNA-cmnm(5)s(2)U34. The polypeptide is tRNA uridine 5-carboxymethylaminomethyl modification enzyme MnmG (Francisella tularensis subsp. holarctica (strain FTNF002-00 / FTA)).